Here is a 67-residue protein sequence, read N- to C-terminus: Conotoxin Cl6.10 (67 aa).

A signal peptide spans 1–24 (MKLTCVLIAAVLLLAVCQLDSADA). Positions 25-37 (TAYMRKDPSLRSP) are excised as a propeptide. Disulfide bonds link Cys-43/Cys-57, Cys-50/Cys-61, and Cys-56/Cys-65.

Belongs to the conotoxin O1 superfamily. Expressed by the venom duct.

Its subcellular location is the secreted. The polypeptide is Conotoxin Cl6.10 (Californiconus californicus (California cone)).